Reading from the N-terminus, the 475-residue chain is UDP-N-acetylmuramate--L-alanine ligase (475 aa).

114–120 contacts ATP; that stretch reads GTHGKTT.

Belongs to the MurCDEF family.

The protein localises to the cytoplasm. The catalysed reaction is UDP-N-acetyl-alpha-D-muramate + L-alanine + ATP = UDP-N-acetyl-alpha-D-muramoyl-L-alanine + ADP + phosphate + H(+). The protein operates within cell wall biogenesis; peptidoglycan biosynthesis. Cell wall formation. This Bartonella henselae (strain ATCC 49882 / DSM 28221 / CCUG 30454 / Houston 1) (Rochalimaea henselae) protein is UDP-N-acetylmuramate--L-alanine ligase.